Consider the following 318-residue polypeptide: NADH-ubiquinone oxidoreductase chain 1 (318 aa).

Transmembrane regions (helical) follow at residues 2–22 (FMIN…FLTL), 68–88 (ISMF…MWTP), 100–120 (LGVL…LWSG), 146–166 (LAII…PTLI), 171–191 (HMWL…STLA), 222–242 (LFFL…TILF), 253–273 (ELYT…FLWV), and 293–313 (FLPL…ITAG).

The protein belongs to the complex I subunit 1 family. Core subunit of respiratory chain NADH dehydrogenase (Complex I) which is composed of 45 different subunits.

It is found in the mitochondrion inner membrane. The enzyme catalyses a ubiquinone + NADH + 5 H(+)(in) = a ubiquinol + NAD(+) + 4 H(+)(out). Core subunit of the mitochondrial membrane respiratory chain NADH dehydrogenase (Complex I) which catalyzes electron transfer from NADH through the respiratory chain, using ubiquinone as an electron acceptor. Essential for the catalytic activity and assembly of complex I. This Hipposideros diadema (Diadem leaf-nosed bat) protein is NADH-ubiquinone oxidoreductase chain 1 (MT-ND1).